The primary structure comprises 482 residues: tRNA sulfurtransferase (482 aa).

The THUMP domain maps to 61–165; that stretch reads LAIRDALTRI…DDRLLLIKGR (105 aa). Residues 183 to 184, lysine 265, glycine 287, and glutamine 296 contribute to the ATP site; that span reads LI. A disulfide bridge connects residues cysteine 344 and cysteine 456. Residues 404–482 form the Rhodanese domain; that stretch reads FGPNDVILDI…GFANVKVYRP (79 aa). Cysteine 456 serves as the catalytic Cysteine persulfide intermediate.

Belongs to the ThiI family.

It is found in the cytoplasm. The enzyme catalyses [ThiI sulfur-carrier protein]-S-sulfanyl-L-cysteine + a uridine in tRNA + 2 reduced [2Fe-2S]-[ferredoxin] + ATP + H(+) = [ThiI sulfur-carrier protein]-L-cysteine + a 4-thiouridine in tRNA + 2 oxidized [2Fe-2S]-[ferredoxin] + AMP + diphosphate. It catalyses the reaction [ThiS sulfur-carrier protein]-C-terminal Gly-Gly-AMP + S-sulfanyl-L-cysteinyl-[cysteine desulfurase] + AH2 = [ThiS sulfur-carrier protein]-C-terminal-Gly-aminoethanethioate + L-cysteinyl-[cysteine desulfurase] + A + AMP + 2 H(+). The protein operates within cofactor biosynthesis; thiamine diphosphate biosynthesis. Functionally, catalyzes the ATP-dependent transfer of a sulfur to tRNA to produce 4-thiouridine in position 8 of tRNAs, which functions as a near-UV photosensor. Also catalyzes the transfer of sulfur to the sulfur carrier protein ThiS, forming ThiS-thiocarboxylate. This is a step in the synthesis of thiazole, in the thiamine biosynthesis pathway. The sulfur is donated as persulfide by IscS. This is tRNA sulfurtransferase from Salmonella choleraesuis (strain SC-B67).